The sequence spans 1165 residues: Immunoglobulin superfamily member 3 (1165 aa).

The N-terminal stretch at 1–20 (MGTAAGLLLAALLLAGTSWA) is a signal peptide. Topologically, residues 21–1095 (QREVNIQQGP…LQSTICANDA (1075 aa)) are extracellular. Ig-like C2-type domains lie at 22-139 (REVN…AKMN), 144-262 (PDTL…WFPL), 276-386 (PTDK…RGPS), 406-527 (PLRT…WQLL), 545-661 (FAVT…WTQL), 678-800 (PRLQ…EEAS), 810-934 (PDAN…WYKR), and 951-1067 (PALQ…WYLL). Disulfide bonds link Cys43-Cys121 and Cys168-Cys246. The EWI motif signature appears at 250-252 (EWI). 6 disulfide bridges follow: Cys302–Cys376, Cys432–Cys511, Cys566–Cys645, Cys701–Cys779, Cys835–Cys918, and Cys974–Cys1051. The helical transmembrane segment at 1096–1116 (LFYLVFFYPFPIFGILIITIL) threads the bilayer. The Cytoplasmic portion of the chain corresponds to 1117 to 1165 (LVRFRHRPTSKPGEGKNGVPLLWIKEPHLNYSPTCLEPPVLSIHPGTID).

Its subcellular location is the membrane. The chain is Immunoglobulin superfamily member 3 (igsf3) from Xenopus laevis (African clawed frog).